The primary structure comprises 406 residues: Cysteine desulfurase (406 aa).

Lysine 226 bears the N6-(pyridoxal phosphate)lysine mark. Catalysis depends on cysteine 364, which acts as the Cysteine persulfide intermediate.

Belongs to the class-V pyridoxal-phosphate-dependent aminotransferase family. Csd subfamily. In terms of assembly, homodimer. Interacts with SufE and the SufBCD complex composed of SufB, SufC and SufD. The interaction with SufE is required to mediate the direct transfer of the sulfur atom from the S-sulfanylcysteine. It depends on pyridoxal 5'-phosphate as a cofactor.

It is found in the cytoplasm. It catalyses the reaction (sulfur carrier)-H + L-cysteine = (sulfur carrier)-SH + L-alanine. The enzyme catalyses L-selenocysteine + AH2 = hydrogenselenide + L-alanine + A + H(+). It functions in the pathway cofactor biosynthesis; iron-sulfur cluster biosynthesis. Cysteine desulfurases mobilize the sulfur from L-cysteine to yield L-alanine, an essential step in sulfur metabolism for biosynthesis of a variety of sulfur-containing biomolecules. Component of the suf operon, which is activated and required under specific conditions such as oxidative stress and iron limitation. Acts as a potent selenocysteine lyase in vitro, that mobilizes selenium from L-selenocysteine. Selenocysteine lyase activity is however unsure in vivo. This chain is Cysteine desulfurase, found in Salmonella gallinarum (strain 287/91 / NCTC 13346).